The primary structure comprises 151 residues: Nucleoside diphosphate kinase (151 aa).

6 residues coordinate ATP: lysine 9, phenylalanine 57, arginine 86, threonine 92, arginine 103, and asparagine 113. Histidine 116 acts as the Pros-phosphohistidine intermediate in catalysis.

This sequence belongs to the NDK family. In terms of assembly, homotetramer. It depends on Mg(2+) as a cofactor.

It localises to the cytoplasm. It catalyses the reaction a 2'-deoxyribonucleoside 5'-diphosphate + ATP = a 2'-deoxyribonucleoside 5'-triphosphate + ADP. It carries out the reaction a ribonucleoside 5'-diphosphate + ATP = a ribonucleoside 5'-triphosphate + ADP. Its function is as follows. Major role in the synthesis of nucleoside triphosphates other than ATP. The ATP gamma phosphate is transferred to the NDP beta phosphate via a ping-pong mechanism, using a phosphorylated active-site intermediate. The polypeptide is Nucleoside diphosphate kinase (Chloroflexus aggregans (strain MD-66 / DSM 9485)).